We begin with the raw amino-acid sequence, 163 residues long: Bacterial ISG15-like ubiquitin-like protein BilA (163 aa).

2 Ubiquitin-like BIL-type domains span residues 4-80 (LVVF…RCKR) and 81-163 (IRAT…RIEG). Residue glycine 163 forms a Glycyl lysine isopeptide (Gly-Lys) (interchain with K-? in central tail fiber acceptor protein) linkage.

Its function is as follows. Component of the Bil (bacterial ISG15-like) antiviral defense system, composed of BilA, BilB, BilC and BilD. The Bil system specifically conjugates a ubiquitin-like moiety (bilA) to the bacteriophage central tail fiber (CTF, or tip attachment protein J) via reactions involving E1 (bilD) and E2 (bilB). Modifies CTF of phage SECphi27 and SECphi4, which probably interferes with assembly of the phage tail. Also modifies T5 baseplate hub protein pb3 (gene D16), but not gp27 of phage T6 (Bil defends against T6). Bil-encoding bacteria produce mostly defective phage SECphi27, many of which have phage assembly defects, including no tails. SECphi27 phage progeny produced in E.coli with the Bil system inject less DNA into naive host cells, maybe because the phage are less able to adsorb and inject their DNA into host cells. Expression of the Bil system in E.coli (strain MG1655) confers about 100-fold resistance to phage SECphi27, SECphi18, SECphi6, SECphi4 and T5, but not to SECphi17. When cells expressing the Bil system are infected by phage SECphi27 at low multiplicity of infection (0.03 MOI) the culture survives, at 3.0 MOI the culture collapses at the same time as cells without the Bil system. This chain is Bacterial ISG15-like ubiquitin-like protein BilA, found in Collimonas sp. (strain OK412).